The primary structure comprises 310 residues: Porphobilinogen deaminase (310 aa).

C242 is subject to S-(dipyrrolylmethanemethyl)cysteine.

It belongs to the HMBS family. As to quaternary structure, monomer. Dipyrromethane is required as a cofactor.

The catalysed reaction is 4 porphobilinogen + H2O = hydroxymethylbilane + 4 NH4(+). Its pathway is porphyrin-containing compound metabolism; protoporphyrin-IX biosynthesis; coproporphyrinogen-III from 5-aminolevulinate: step 2/4. In terms of biological role, tetrapolymerization of the monopyrrole PBG into the hydroxymethylbilane pre-uroporphyrinogen in several discrete steps. This Alcanivorax borkumensis (strain ATCC 700651 / DSM 11573 / NCIMB 13689 / SK2) protein is Porphobilinogen deaminase.